The chain runs to 245 residues: Orotidine 5'-phosphate decarboxylase (245 aa).

Substrate contacts are provided by residues aspartate 22, lysine 44, 71-80, threonine 131, arginine 192, glutamine 201, glycine 221, and arginine 222; that span reads DLKFHDIPNT. Residue lysine 73 is the Proton donor of the active site.

It belongs to the OMP decarboxylase family. Type 1 subfamily. As to quaternary structure, homodimer.

It carries out the reaction orotidine 5'-phosphate + H(+) = UMP + CO2. Its pathway is pyrimidine metabolism; UMP biosynthesis via de novo pathway; UMP from orotate: step 2/2. Catalyzes the decarboxylation of orotidine 5'-monophosphate (OMP) to uridine 5'-monophosphate (UMP). This is Orotidine 5'-phosphate decarboxylase from Salmonella gallinarum (strain 287/91 / NCTC 13346).